We begin with the raw amino-acid sequence, 535 residues long: Phosphoenolpyruvate carboxykinase (ATP) 1 (535 aa).

3 residues coordinate substrate: arginine 58, tyrosine 193, and lysine 199. ATP-binding positions include lysine 199, histidine 218, and 234-242 (GLSGTGKTT). Positions 199 and 218 each coordinate Mn(2+). Aspartate 255 lines the Mn(2+) pocket. Residues glutamate 283, arginine 321, 440 to 441 (RI), and threonine 446 each bind ATP. Arginine 321 serves as a coordination point for substrate.

The protein belongs to the phosphoenolpyruvate carboxykinase (ATP) family. Mn(2+) serves as cofactor.

It localises to the cytoplasm. It catalyses the reaction oxaloacetate + ATP = phosphoenolpyruvate + ADP + CO2. Its pathway is carbohydrate biosynthesis; gluconeogenesis. Involved in the gluconeogenesis. Catalyzes the conversion of oxaloacetate (OAA) to phosphoenolpyruvate (PEP) through direct phosphoryl transfer between the nucleoside triphosphate and OAA. The polypeptide is Phosphoenolpyruvate carboxykinase (ATP) 1 (Salinibacter ruber (strain DSM 13855 / M31)).